We begin with the raw amino-acid sequence, 1052 residues long: Protein HelA (1052 aa).

A run of 13 helical transmembrane segments spans residues 14–34 (WFVL…FQRL), 121–141 (LPPG…EIFM), 348–368 (GALL…AALI), 369–389 (TAMV…ENQI), 393–413 (LMSL…IIVE), 450–470 (SIFG…LTGV), 483–503 (IIAL…AVAI), 537–557 (VVIS…FHLG), 878–898 (LQIV…ISFG), 903–923 (ALLV…ALWL), 934–954 (VGFI…ITFI), 979–999 (PVLM…LATG), and 1011–1031 (VVIG…PGLY).

The protein belongs to the resistance-nodulation-cell division (RND) (TC 2.A.6) family.

Its subcellular location is the cell inner membrane. In terms of biological role, presumed to function with HelC and HelB in efflux of an unidentified substrate. This chain is Protein HelA (helA), found in Legionella pneumophila.